The primary structure comprises 311 residues: Porphobilinogen deaminase (311 aa).

Cys243 bears the S-(dipyrrolylmethanemethyl)cysteine mark.

The protein belongs to the HMBS family. In terms of assembly, monomer. Dipyrromethane is required as a cofactor.

The catalysed reaction is 4 porphobilinogen + H2O = hydroxymethylbilane + 4 NH4(+). It participates in porphyrin-containing compound metabolism; protoporphyrin-IX biosynthesis; coproporphyrinogen-III from 5-aminolevulinate: step 2/4. Its function is as follows. Tetrapolymerization of the monopyrrole PBG into the hydroxymethylbilane pre-uroporphyrinogen in several discrete steps. The chain is Porphobilinogen deaminase from Aliivibrio fischeri (strain ATCC 700601 / ES114) (Vibrio fischeri).